The primary structure comprises 123 residues: S-adenosylmethionine decarboxylase proenzyme 2 (123 aa).

Catalysis depends on serine 65, which acts as the Schiff-base intermediate with substrate; via pyruvic acid. Serine 65 carries the pyruvic acid (Ser); by autocatalysis modification. The active-site Proton acceptor; for processing activity is histidine 70. Cysteine 85 functions as the Proton donor; for catalytic activity in the catalytic mechanism.

Belongs to the prokaryotic AdoMetDC family. Type 1 subfamily. In terms of assembly, heterotetramer of two alpha and two beta chains arranged as a dimer of alpha/beta heterodimers. Requires pyruvate as cofactor. Post-translationally, is synthesized initially as an inactive proenzyme. Formation of the active enzyme involves a self-maturation process in which the active site pyruvoyl group is generated from an internal serine residue via an autocatalytic post-translational modification. Two non-identical subunits are generated from the proenzyme in this reaction, and the pyruvate is formed at the N-terminus of the alpha chain, which is derived from the carboxyl end of the proenzyme. The post-translation cleavage follows an unusual pathway, termed non-hydrolytic serinolysis, in which the side chain hydroxyl group of the serine supplies its oxygen atom to form the C-terminus of the beta chain, while the remainder of the serine residue undergoes an oxidative deamination to produce ammonia and the pyruvoyl group blocking the N-terminus of the alpha chain.

The catalysed reaction is S-adenosyl-L-methionine + H(+) = S-adenosyl 3-(methylsulfanyl)propylamine + CO2. Its pathway is amine and polyamine biosynthesis; S-adenosylmethioninamine biosynthesis; S-adenosylmethioninamine from S-adenosyl-L-methionine: step 1/1. Its function is as follows. Catalyzes the decarboxylation of S-adenosylmethionine to S-adenosylmethioninamine (dcAdoMet), the propylamine donor required for the synthesis of the polyamines spermine and spermidine from the diamine putrescine. The protein is S-adenosylmethionine decarboxylase proenzyme 2 of Bacillus anthracis.